The chain runs to 316 residues: Ribosomal protein L11 methyltransferase (316 aa).

S-adenosyl-L-methionine-binding residues include threonine 157, glycine 178, aspartate 200, and asparagine 243.

It belongs to the methyltransferase superfamily. PrmA family.

It is found in the cytoplasm. The enzyme catalyses L-lysyl-[protein] + 3 S-adenosyl-L-methionine = N(6),N(6),N(6)-trimethyl-L-lysyl-[protein] + 3 S-adenosyl-L-homocysteine + 3 H(+). Its function is as follows. Methylates ribosomal protein L11. This is Ribosomal protein L11 methyltransferase from Streptococcus pneumoniae (strain ATCC 700669 / Spain 23F-1).